Here is a 469-residue protein sequence, read N- to C-terminus: Adenosylhomocysteinase (469 aa).

Thr-63, Asp-139, and Glu-164 together coordinate substrate. Residue 165 to 167 (TTT) coordinates NAD(+). Substrate is bound by residues Lys-194 and Asp-198. NAD(+)-binding positions include Asn-199, 228–233 (GYGDVG), Glu-251, Asn-300, 321–323 (IGH), and Asn-375.

It belongs to the adenosylhomocysteinase family. NAD(+) serves as cofactor.

The protein localises to the cytoplasm. It carries out the reaction S-adenosyl-L-homocysteine + H2O = L-homocysteine + adenosine. It participates in amino-acid biosynthesis; L-homocysteine biosynthesis; L-homocysteine from S-adenosyl-L-homocysteine: step 1/1. In terms of biological role, may play a key role in the regulation of the intracellular concentration of adenosylhomocysteine. This Pseudomonas aeruginosa (strain UCBPP-PA14) protein is Adenosylhomocysteinase.